A 128-amino-acid polypeptide reads, in one-letter code: L-ectoine synthase (128 aa).

Belongs to the ectoine synthase family.

The enzyme catalyses (2S)-4-acetamido-2-aminobutanoate = L-ectoine + H2O. It participates in amine and polyamine biosynthesis; ectoine biosynthesis; L-ectoine from L-aspartate 4-semialdehyde: step 3/3. Catalyzes the circularization of gamma-N-acetyl-alpha,gamma-diaminobutyric acid (ADABA) to ectoine (1,4,5,6-tetrahydro-2-methyl-4-pyrimidine carboxylic acid), which is an excellent osmoprotectant. This Vibrio parahaemolyticus serotype O3:K6 (strain RIMD 2210633) protein is L-ectoine synthase.